The following is a 642-amino-acid chain: Replication protein E1 (642 aa).

The short motif at 83 to 85 (KRK) is the Nuclear localization signal element. Ser89, Ser93, and Ser107 each carry phosphoserine; by host. Residues 106–115 (LSPRLGGLQL) carry the Nuclear export signal motif. The segment at 179–345 (GTNTPTTRVV…QTIVEHCFAD (167 aa)) is DNA-binding region. Positions 444-594 (IDFLTFMSAF…FPLDKNGNPV (151 aa)) constitute an SF3 helicase domain. An ATP-binding site is contributed by 470–477 (GPPNTGKS). Residue Lys551 forms a Glycyl lysine isopeptide (Lys-Gly) (interchain with G-Cter in SUMO) linkage.

The protein belongs to the papillomaviridae E1 protein family. In terms of assembly, can form hexamers. Interacts with E2 protein; this interaction increases E1 DNA binding specificity. Interacts with host DNA polymerase subunit POLA2. Interacts with host single stranded DNA-binding protein RPA1. Interacts with host TOP1; this interaction stimulates the enzymatic activity of TOP1. Post-translationally, phosphorylated. In terms of processing, sumoylated.

Its subcellular location is the host nucleus. The enzyme catalyses Couples ATP hydrolysis with the unwinding of duplex DNA by translocating in the 3'-5' direction.. It catalyses the reaction ATP + H2O = ADP + phosphate + H(+). ATP-dependent DNA 3'-5' helicase required for initiation of viral DNA replication. It forms a complex with the viral E2 protein. The E1-E2 complex binds to the replication origin which contains binding sites for both proteins. During the initial step, a dimer of E1 interacts with a dimer of protein E2 leading to a complex that binds the viral origin of replication with high specificity. Then, a second dimer of E1 displaces the E2 dimer in an ATP-dependent manner to form the E1 tetramer. Following this, two E1 monomers are added to each half of the site, which results in the formation of two E1 trimers on the viral ori. Subsequently, two hexamers will be created. The double hexamer acts as a bi-directional helicase machinery and unwinds the viral DNA and then recruits the host DNA polymerase to start replication. This is Replication protein E1 from Human papillomavirus type 32.